A 224-amino-acid chain; its full sequence is Protein-L-isoaspartate O-methyltransferase (224 aa).

Residue S70 is part of the active site.

It belongs to the methyltransferase superfamily. L-isoaspartyl/D-aspartyl protein methyltransferase family.

The protein localises to the cytoplasm. The catalysed reaction is [protein]-L-isoaspartate + S-adenosyl-L-methionine = [protein]-L-isoaspartate alpha-methyl ester + S-adenosyl-L-homocysteine. In terms of biological role, catalyzes the methyl esterification of L-isoaspartyl residues in peptides and proteins that result from spontaneous decomposition of normal L-aspartyl and L-asparaginyl residues. It plays a role in the repair and/or degradation of damaged proteins. The polypeptide is Protein-L-isoaspartate O-methyltransferase (Cellvibrio japonicus (strain Ueda107) (Pseudomonas fluorescens subsp. cellulosa)).